We begin with the raw amino-acid sequence, 134 residues long: Acyl-CoA thioester hydrolase YbgC (134 aa).

Asp-18 is an active-site residue.

This sequence belongs to the 4-hydroxybenzoyl-CoA thioesterase family.

The protein localises to the cell inner membrane. Functionally, thioesterase that appears to be involved in phospholipid metabolism. Some specific acyl-ACPs could be physiological substrates. Displays acyl-CoA thioesterase activity on malonyl-CoA in vitro, catalyzing the hydrolysis of the thioester bond. In Escherichia coli O157:H7, this protein is Acyl-CoA thioester hydrolase YbgC (ybgC).